Consider the following 105-residue polypeptide: Large ribosomal subunit protein eL30 (105 aa).

It belongs to the eukaryotic ribosomal protein eL30 family.

The polypeptide is Large ribosomal subunit protein eL30 (RPL30) (Trypanosoma brucei brucei).